A 485-amino-acid polypeptide reads, in one-letter code: Threonine synthase-like 2 (485 aa).

The residue at position 113 (Lys-113) is an N6-(pyridoxal phosphate)lysine.

It belongs to the threonine synthase family. Pyridoxal 5'-phosphate is required as a cofactor.

Functionally, acts as a catabolic phospho-lyase on both gamma- and beta-phosphorylated substrates. Degrades O-phospho-threonine (PThr) to alpha-ketobutyrate, ammonia and phosphate. The polypeptide is Threonine synthase-like 2 (Thnsl2) (Rattus norvegicus (Rat)).